Here is an 84-residue protein sequence, read N- to C-terminus: CDC42 small effector protein 2 (84 aa).

2 S-palmitoyl cysteine lipidation sites follow: Cys-10 and Cys-11. Positions 29–42 (IGEPTNFAHTAHVG) constitute a CRIB domain. Residues Ser-43 and Ser-52 each carry the phosphoserine modification.

Belongs to the CDC42SE/SPEC family. Interacts with CDC42 (in GTP-bound form). Interacts weakly with RAC1 and not at all with RHOA.

The protein resides in the cytoplasm. Its subcellular location is the cytoskeleton. It localises to the cell membrane. The protein localises to the cell projection. It is found in the phagocytic cup. Probably involved in the organization of the actin cytoskeleton by acting downstream of CDC42, inducing actin filament assembly. Alters CDC42-induced cell shape changes. In activated T-cells, may play a role in CDC42-mediated F-actin accumulation at the immunological synapse. May play a role in early contractile events in phagocytosis in macrophages. This chain is CDC42 small effector protein 2 (CDC42SE2), found in Pongo abelii (Sumatran orangutan).